The primary structure comprises 149 residues: Deoxyuridine 5'-triphosphate nucleotidohydrolase (149 aa).

Substrate is bound by residues 68-70 (RSG), Asn-81, 85-87 (LID), and Met-95.

The protein belongs to the dUTPase family. It depends on Mg(2+) as a cofactor.

The enzyme catalyses dUTP + H2O = dUMP + diphosphate + H(+). Its pathway is pyrimidine metabolism; dUMP biosynthesis; dUMP from dCTP (dUTP route): step 2/2. In terms of biological role, this enzyme is involved in nucleotide metabolism: it produces dUMP, the immediate precursor of thymidine nucleotides and it decreases the intracellular concentration of dUTP so that uracil cannot be incorporated into DNA. This is Deoxyuridine 5'-triphosphate nucleotidohydrolase from Bordetella bronchiseptica (strain ATCC BAA-588 / NCTC 13252 / RB50) (Alcaligenes bronchisepticus).